Here is a 459-residue protein sequence, read N- to C-terminus: MDPSQHNPPVGHQIVHVRGDSETDLEALFNAVMNPKGAVVPQSVPMRMRKLPDSFFKPPEPKSHSRQASTDAGSGGVLTPHHVRAHSSPASLQLGAVSGGSLSGMASAGASPQHLRQSSYEIPDDVPLPPGWEMAKTSSGQRYFLNHIDQTTTWQDPRKALLQLNQATPPSTVPVQQQNLLSPASGPLPEGWEQAITPEGEIYYINHKNKTTSWLDPRLETRYALNQQRITQSAPVKQGGPLPPNPHGGVMGGNNQMRLQQMEKERIRLKQQELLRQSQRPQIDLQPSTANQDAEHCDELALRNQLPTSMDQDGSSNPVSSPMAQDARTMTANSNDPFLNSVSSGTYHSRDESTDSGLSMSSYSVPRTPDDFLNSVDEMDTGDPLAPSMATQPSRFPDYLDTIPGTDVDLGTLEGESMAVEGEELMPSLQEALSSDILNDMESVLAATKIDKESFLTWL.

Residues S21, S69, S87, and S119 each carry the phosphoserine; by LATS1 and LATS2 modification. Disordered regions lie at residues L51 to S88 and S103 to P129. 2 WW domains span residues V126–K159 and G186–L219. Disordered stretches follow at residues T231–N254 and P307–S364. Residues H247–L459 are transactivation domain. Polar residues-rich tracts occupy residues P307–Y347 and D355–S364.

This sequence belongs to the YAP1 family. Phosphorylated by lats1 and lats2; leading to cytoplasmic translocation and inactivation. Ubiquitously expressed throughout development.

The protein resides in the cytoplasm. Its subcellular location is the nucleus. It localises to the cell junction. It is found in the tight junction. The protein localises to the cell membrane. Its function is as follows. Transcriptional regulator which can act both as a coactivator and a corepressor and is the critical downstream regulatory target in the Hippo signaling pathway that plays a pivotal role in organ size control and tumor suppression by restricting proliferation and promoting apoptosis. Plays a key role in tissue tension and 3D tissue shape by regulating cortical actomyosin network formation. This Oryzias latipes (Japanese rice fish) protein is Transcriptional coactivator YAP1.